A 964-amino-acid chain; its full sequence is Iron-responsive element-binding protein 2 (964 aa).

Positions 513, 579, and 582 each coordinate [4Fe-4S] cluster.

This sequence belongs to the aconitase/IPM isomerase family. In terms of assembly, interacts with RBCK1 only in iron-rich conditions. Interacts (when associated with the 4Fe-4S) with FBXL5. Interacts with CIAO1 and CIAO2A. The cofactor is [4Fe-4S] cluster. In terms of processing, ubiquitinated and degraded by the proteasome in presence of high level of iron and oxygen. Ubiquitinated by a SCF complex containing FBXL5. Upon iron and oxygen depletion FBXL5 is degraded, preventing ubiquitination and allowing its RNA-binding activity.

Its subcellular location is the cytoplasm. Its function is as follows. RNA-binding protein that binds to iron-responsive elements (IRES), which are stem-loop structures found in the 5'-UTR of ferritin, and delta aminolevulinic acid synthase mRNAs, and in the 3'-UTR of transferrin receptor mRNA. Binding to the IRE element in ferritin results in the repression of its mRNA translation. Binding of the protein to the transferrin receptor mRNA inhibits the degradation of this otherwise rapidly degraded mRNA. In Sus scrofa (Pig), this protein is Iron-responsive element-binding protein 2 (IREB2).